Consider the following 251-residue polypeptide: Hydroxyacylglutathione hydrolase (251 aa).

His53, His55, Asp57, His58, His110, Asp127, and His165 together coordinate Zn(2+).

Belongs to the metallo-beta-lactamase superfamily. Glyoxalase II family. Monomer. Requires Zn(2+) as cofactor.

It carries out the reaction an S-(2-hydroxyacyl)glutathione + H2O = a 2-hydroxy carboxylate + glutathione + H(+). Its pathway is secondary metabolite metabolism; methylglyoxal degradation; (R)-lactate from methylglyoxal: step 2/2. In terms of biological role, thiolesterase that catalyzes the hydrolysis of S-D-lactoyl-glutathione to form glutathione and D-lactic acid. This Escherichia coli O6:H1 (strain CFT073 / ATCC 700928 / UPEC) protein is Hydroxyacylglutathione hydrolase.